A 103-amino-acid polypeptide reads, in one-letter code: Small ribosomal subunit protein uS10 (103 aa).

This sequence belongs to the universal ribosomal protein uS10 family. As to quaternary structure, part of the 30S ribosomal subunit.

Functionally, involved in the binding of tRNA to the ribosomes. In Laribacter hongkongensis (strain HLHK9), this protein is Small ribosomal subunit protein uS10.